A 92-amino-acid chain; its full sequence is C-C motif chemokine 4 (92 aa).

An N-terminal signal peptide occupies residues 1–23 (MKLCVSAFSLLLLVAAFCDSVLS). 2 cysteine pairs are disulfide-bonded: C34–C58 and C35–C74.

It belongs to the intercrine beta (chemokine CC) family. As to quaternary structure, homodimer.

The protein localises to the secreted. Monokine with inflammatory and chemokinetic properties. The protein is C-C motif chemokine 4 (Ccl4) of Rattus norvegicus (Rat).